The primary structure comprises 205 residues: 3-demethoxyubiquinol 3-hydroxylase (205 aa).

The Fe cation site is built by E54, E84, H87, E136, E168, and H171.

Belongs to the COQ7 family. Fe cation serves as cofactor.

It localises to the cell membrane. It catalyses the reaction a 5-methoxy-2-methyl-3-(all-trans-polyprenyl)benzene-1,4-diol + AH2 + O2 = a 3-demethylubiquinol + A + H2O. The protein operates within cofactor biosynthesis; ubiquinone biosynthesis. Catalyzes the hydroxylation of 2-nonaprenyl-3-methyl-6-methoxy-1,4-benzoquinol during ubiquinone biosynthesis. The protein is 3-demethoxyubiquinol 3-hydroxylase of Acidovorax sp. (strain JS42).